The primary structure comprises 294 residues: Probable endonuclease 4 (294 aa).

Zn(2+) is bound by residues H78, H118, E157, D191, H194, H228, D241, H243, and E273.

It belongs to the AP endonuclease 2 family. The cofactor is Zn(2+).

It carries out the reaction Endonucleolytic cleavage to 5'-phosphooligonucleotide end-products.. Endonuclease IV plays a role in DNA repair. It cleaves phosphodiester bonds at apurinic or apyrimidinic (AP) sites, generating a 3'-hydroxyl group and a 5'-terminal sugar phosphate. The chain is Probable endonuclease 4 from Streptomyces coelicolor (strain ATCC BAA-471 / A3(2) / M145).